A 398-amino-acid chain; its full sequence is Chalcone synthase 1 (398 aa).

A CoA-binding site is contributed by 58–65; the sequence is KFKRMCDK. Catalysis depends on cysteine 167, which acts as the Acyl-thioester intermediate. Substrate-binding positions include threonine 200 and 219-220; that span reads GD. A CoA-binding site is contributed by alanine 311.

This sequence belongs to the thiolase-like superfamily. Chalcone/stilbene synthases family. Homodimer.

It catalyses the reaction (E)-4-coumaroyl-CoA + 3 malonyl-CoA + 3 H(+) = 2',4,4',6'-tetrahydroxychalcone + 3 CO2 + 4 CoA. It functions in the pathway secondary metabolite biosynthesis; flavonoid biosynthesis. In terms of biological role, the primary product of this enzyme is 4,2',4',6'-tetrahydroxychalcone (also termed naringenin-chalcone or chalcone) which can under specific conditions spontaneously isomerize into naringenin. In Oryza sativa subsp. japonica (Rice), this protein is Chalcone synthase 1 (CHS1).